A 261-amino-acid chain; its full sequence is Small ribosomal subunit protein uS2 (261 aa).

It belongs to the universal ribosomal protein uS2 family.

The polypeptide is Small ribosomal subunit protein uS2 (Paracoccus denitrificans (strain Pd 1222)).